The primary structure comprises 485 residues: Glycogen synthase (485 aa).

Lys15 serves as a coordination point for ADP-alpha-D-glucose.

The protein belongs to the glycosyltransferase 1 family. Bacterial/plant glycogen synthase subfamily.

It carries out the reaction [(1-&gt;4)-alpha-D-glucosyl](n) + ADP-alpha-D-glucose = [(1-&gt;4)-alpha-D-glucosyl](n+1) + ADP + H(+). The protein operates within glycan biosynthesis; glycogen biosynthesis. Functionally, synthesizes alpha-1,4-glucan chains using ADP-glucose. In Thermosipho africanus (strain TCF52B), this protein is Glycogen synthase.